The chain runs to 355 residues: Mitogen-activated protein kinase HOG1 (355 aa).

A Protein kinase domain is found at 20-299 (YTDLQPVGMG…AEQALAHPYL (280 aa)). ATP contacts are provided by residues 26 to 34 (VGMGAFGLV) and Lys49. Catalysis depends on Asp141, which acts as the Proton acceptor. Phosphothreonine is present on Thr171. The TXY motif lies at 171-173 (TGY). A Phosphotyrosine modification is found at Tyr173.

It belongs to the protein kinase superfamily. Ser/Thr protein kinase family. MAP kinase subfamily. HOG1 sub-subfamily. Mg(2+) serves as cofactor. Dually phosphorylated on Thr-171 and Tyr-173, which activates the enzyme. Phosphorylation is induced by osmotic stress and the presence of the antifungal agent iprodione.

The protein localises to the cytoplasm. Its subcellular location is the nucleus. The catalysed reaction is L-seryl-[protein] + ATP = O-phospho-L-seryl-[protein] + ADP + H(+). It carries out the reaction L-threonyl-[protein] + ATP = O-phospho-L-threonyl-[protein] + ADP + H(+). Activated by tyrosine and threonine phosphorylation. In terms of biological role, proline-directed serine/threonine-protein kinase involved in a signal transduction pathway that is activated by changes in the osmolarity of the extracellular environment. Controls osmotic regulation of transcription of target genes. This Cochliobolus heterostrophus (Southern corn leaf blight fungus) protein is Mitogen-activated protein kinase HOG1 (HOG1).